Here is a 507-residue protein sequence, read N- to C-terminus: Probable Xaa-Pro aminopeptidase ARB_01886 (507 aa).

Mn(2+) contacts are provided by D275, D286, E434, and E478.

Belongs to the peptidase M24B family. Mn(2+) is required as a cofactor.

The catalysed reaction is Release of any N-terminal amino acid, including proline, that is linked to proline, even from a dipeptide or tripeptide.. Its function is as follows. Catalyzes the removal of a penultimate prolyl residue from the N-termini of peptides. The chain is Probable Xaa-Pro aminopeptidase ARB_01886 from Arthroderma benhamiae (strain ATCC MYA-4681 / CBS 112371) (Trichophyton mentagrophytes).